The following is a 473-amino-acid chain: 3-isopropylmalate dehydratase large subunit (473 aa).

[4Fe-4S] cluster-binding residues include C348, C408, and C411.

It belongs to the aconitase/IPM isomerase family. LeuC type 1 subfamily. Heterodimer of LeuC and LeuD. It depends on [4Fe-4S] cluster as a cofactor.

The enzyme catalyses (2R,3S)-3-isopropylmalate = (2S)-2-isopropylmalate. It participates in amino-acid biosynthesis; L-leucine biosynthesis; L-leucine from 3-methyl-2-oxobutanoate: step 2/4. In terms of biological role, catalyzes the isomerization between 2-isopropylmalate and 3-isopropylmalate, via the formation of 2-isopropylmaleate. In Haloarcula marismortui (strain ATCC 43049 / DSM 3752 / JCM 8966 / VKM B-1809) (Halobacterium marismortui), this protein is 3-isopropylmalate dehydratase large subunit.